Consider the following 302-residue polypeptide: Deoxyhypusine hydroxylase (302 aa).

Position 1 is an N-acetylmethionine (methionine 1). 5 HEAT-like PBS-type repeats span residues 54 to 80 (LKHE…VLQD), 87 to 113 (VRHE…YSSD), 174 to 200 (ERYR…GLHC), 205 to 231 (FRHE…ALAR), and 238 to 264 (VRHE…HADD). Fe cation contacts are provided by histidine 56, histidine 89, and glutamate 90. Fe cation contacts are provided by histidine 207, histidine 240, and glutamate 241.

It belongs to the deoxyhypusine hydroxylase family. Fe(2+) serves as cofactor.

The catalysed reaction is [eIF5A protein]-deoxyhypusine + AH2 + O2 = [eIF5A protein]-hypusine + A + H2O. It functions in the pathway protein modification; eIF5A hypusination. Functionally, catalyzes the hydroxylation of the N(6)-(4-aminobutyl)-L-lysine intermediate produced by deoxyhypusine synthase/DHPS on a critical lysine of the eukaryotic translation initiation factor 5A/eIF-5A. This is the second step of the post-translational modification of that lysine into an unusual amino acid residue named hypusine. Hypusination is unique to mature eIF-5A factor and is essential for its function. In Homo sapiens (Human), this protein is Deoxyhypusine hydroxylase.